Reading from the N-terminus, the 499-residue chain is Cytochrome P450 11B1, mitochondrial (499 aa).

Residues 1-24 constitute a mitochondrion transit peptide; that stretch reads MALRVTADVWLARPWQCLHRTRAL. Residue Cys446 participates in heme binding.

Belongs to the cytochrome P450 family. Heme is required as a cofactor. As to expression, adrenal zona fasciculata/reticularis.

Its subcellular location is the mitochondrion inner membrane. It catalyses the reaction a steroid + 2 reduced [adrenodoxin] + O2 + 2 H(+) = an 11beta-hydroxysteroid + 2 oxidized [adrenodoxin] + H2O. It carries out the reaction 21-hydroxyprogesterone + 2 reduced [adrenodoxin] + O2 + 2 H(+) = corticosterone + 2 oxidized [adrenodoxin] + H2O. The catalysed reaction is 21-hydroxyprogesterone + 2 reduced [adrenodoxin] + O2 + 2 H(+) = 18-hydroxy-11-deoxycorticosterone + 2 oxidized [adrenodoxin] + H2O. The enzyme catalyses 21-hydroxyprogesterone + 2 reduced [adrenodoxin] + O2 + 2 H(+) = 19-hydroxy-11-deoxycorticosterone + 2 oxidized [adrenodoxin] + H2O. It catalyses the reaction 11-deoxycortisol + 2 reduced [adrenodoxin] + O2 + 2 H(+) = cortisol + 2 oxidized [adrenodoxin] + H2O. It carries out the reaction cortisol + 2 reduced [adrenodoxin] + O2 + 2 H(+) = 18-hydroxycortisol + 2 oxidized [adrenodoxin] + H2O. The catalysed reaction is 11-deoxycortisol + 2 reduced [adrenodoxin] + O2 + 2 H(+) = 18-hydroxy-11-deoxycortisol + 2 oxidized [adrenodoxin] + H2O. It participates in steroid biosynthesis; glucocorticoid biosynthesis. The protein operates within steroid hormone biosynthesis. Functionally, a cytochrome P450 monooxygenase involved in the biosynthesis of adrenal corticoids. Catalyzes a variety of reactions that are essential for many species, including detoxification, defense, and the formation of endogenous chemicals like steroid hormones. Steroid 11beta, 18- and 19-hydroxylase with preferred regioselectivity at 11beta, then 18, and lastly 19. Catalyzes the hydroxylation of 11-deoxycortisol and 11-deoxycorticosterone (21-hydroxyprogesterone) at 11beta position, yielding cortisol or corticosterone, respectively, but cannot produce aldosterone. Mechanistically, uses molecular oxygen inserting one oxygen atom into a substrate for hydroxylation and reducing the second into a water molecule. Two electrons are provided by NADPH via a two-protein mitochondrial transfer system comprising flavoprotein FDXR (adrenodoxin/ferredoxin reductase) and nonheme iron-sulfur protein FDX1 or FDX2 (adrenodoxin/ferredoxin). Due to its lack of 18-oxidation activity, it is incapable of generating aldosterone. Could also be involved in the androgen metabolic pathway. In Rattus norvegicus (Rat), this protein is Cytochrome P450 11B1, mitochondrial (Cyp11b1).